Reading from the N-terminus, the 778-residue chain is Subtilisin-like protease SBT3.6 (778 aa).

The signal sequence occupies residues 1–22; the sequence is MMNYRTSIYVVLSLVIFLNVQR. A propeptide spans 23-113 (activation peptide); that stretch reads SFVAESSAKR…VIPDSFYKLA (91 aa). In terms of domain architecture, Inhibitor I9 spans 34–113; the sequence is VHIVYLGEKQ…VIPDSFYKLA (80 aa). Asn69 is a glycosylation site (N-linked (GlcNAc...) asparagine). Residues 117–625 form the Peptidase S8 domain; the sequence is TWDYLGLSAA…GGLVNPEKSA (509 aa). The active-site Charge relay system is the Asp147. N-linked (GlcNAc...) asparagine glycosylation is found at Asn158, Asn180, Asn202, and Asn206. His222 (charge relay system) is an active-site residue. Asn237, Asn399, Asn414, and Asn541 each carry an N-linked (GlcNAc...) asparagine glycan. One can recognise a PA domain in the interval 388–483; sequence SLVYPENPGN…ELGTDILLYT (96 aa). Ser556 acts as the Charge relay system in catalysis. Residues Asn648, Asn724, and Asn759 are each glycosylated (N-linked (GlcNAc...) asparagine).

The protein belongs to the peptidase S8 family.

The protein localises to the secreted. The polypeptide is Subtilisin-like protease SBT3.6 (Arabidopsis thaliana (Mouse-ear cress)).